We begin with the raw amino-acid sequence, 358 residues long: uncharacterized protein (358 aa).

In terms of domain architecture, EF-hand spans 229-264 (KQLHEFKLAFDYFDQEKNGWLDYEHFELCLKSQGYN). Asp-242, Asn-246, Trp-248, and His-253 together coordinate Ca(2+).

This is an uncharacterized protein from Caenorhabditis elegans.